The primary structure comprises 691 residues: Proprotein convertase subtilisin/kexin type 9 (691 aa).

A signal peptide spans 1–30; it reads MGIRCSTWLRWPLSPQLLLLLLLCPTGSRA. The propeptide occupies 31-151; the sequence is QDEDGDYEEL…IEEDSLVFAQ (121 aa). Tyr37 carries the post-translational modification Sulfotyrosine. Ser46 is subject to Phosphoserine. The Peptidase S8 domain occupies 154 to 441; that stretch reads PWNLERIIPA…QRVLTPNRVA (288 aa). Residues Asp185 and His225 each act as charge relay system in the active site. 2 disulfides stabilise this stretch: Cys222-Cys254 and Cys322-Cys357. The active-site Charge relay system is Ser385. Residues 449 to 691 are C-terminal domain; sequence ETGGQLLCRT…PSAKASWVHQ (243 aa). Disulfide bonds link Cys456/Cys526, Cys476/Cys525, and Cys485/Cys508. The Cell attachment site signature appears at 495-497; it reads RGD. The N-linked (GlcNAc...) asparagine glycan is linked to Asn532. 6 disulfides stabilise this stretch: Cys533–Cys600, Cys551–Cys599, Cys561–Cys587, Cys607–Cys678, Cys625–Cys677, and Cys634–Cys653. Ser687 is subject to Phosphoserine.

Belongs to the peptidase S8 family. As to quaternary structure, monomer. Can self-associate to form dimers and higher multimers which may have increased LDLR degrading activity. The precursor protein but not the mature protein may form multimers. Interacts with APOB, VLDLR, LRP8/APOER2 and BACE1. The full-length immature form (pro-PCSK9) interacts with SCNN1A, SCNN1B and SCNN1G. The pro-PCSK9 form (via C-terminal domain) interacts with LDLR. Interacts (via the C-terminal domain) with ANXA2 (via repeat Annexin 1); the interaction inhibits the degradation of LDLR. The cofactor is Ca(2+). In terms of processing, cleavage by furin and PCSK5 generates a truncated inactive protein that is unable to induce LDLR degradation. Post-translationally, undergoes autocatalytic cleavage in the endoplasmic reticulum to release the propeptide from the N-terminus and the cleavage of the propeptide is strictly required for its maturation and activation. The cleaved propeptide however remains associated with the catalytic domain through non-covalent interactions, preventing potential substrates from accessing its active site. As a result, it is secreted from cells as a propeptide-containing, enzymatically inactive protein. Phosphorylation protects the propeptide against proteolysis. Highly expressed in 12-day embryo. In the adult, strongly expressed in liver, small intestine, jejunum, and to a lesser extent in kidney, lung, spleen and thymus. Expression in the liver is up-regulated following partial hepatectomy.

The protein localises to the cytoplasm. It is found in the secreted. Its subcellular location is the endosome. It localises to the lysosome. The protein resides in the cell surface. The protein localises to the endoplasmic reticulum. It is found in the golgi apparatus. With respect to regulation, its proteolytic activity is autoinhibited by the non-covalent binding of the propeptide to the catalytic domain. Inhibited by EGTA. Functionally, crucial player in the regulation of plasma cholesterol homeostasis. Binds to low-density lipid receptor family members: low density lipoprotein receptor (LDLR), very low density lipoprotein receptor (VLDLR), apolipoprotein E receptor (LRP1/APOER) and apolipoprotein receptor 2 (LRP8/APOER2), and promotes their degradation in intracellular acidic compartments. Acts via a non-proteolytic mechanism to enhance the degradation of the hepatic LDLR through a clathrin LDLRAP1/ARH-mediated pathway. May prevent the recycling of LDLR from endosomes to the cell surface or direct it to lysosomes for degradation. Can induce ubiquitination of LDLR leading to its subsequent degradation. Inhibits intracellular degradation of APOB via the autophagosome/lysosome pathway in a LDLR-independent manner. Involved in the disposal of non-acetylated intermediates of BACE1 in the early secretory pathway. Inhibits epithelial Na(+) channel (ENaC)-mediated Na(+) absorption by reducing ENaC surface expression primarily by increasing its proteasomal degradation. Regulates neuronal apoptosis via modulation of LRP8/APOER2 levels and related anti-apoptotic signaling pathways. This chain is Proprotein convertase subtilisin/kexin type 9 (Pcsk9), found in Rattus norvegicus (Rat).